Reading from the N-terminus, the 152-residue chain is Deoxyuridine 5'-triphosphate nucleotidohydrolase (152 aa).

Substrate contacts are provided by residues 71 to 73, asparagine 84, 88 to 90, and methionine 98; these read RSG and LID.

Belongs to the dUTPase family. Mg(2+) is required as a cofactor.

The catalysed reaction is dUTP + H2O = dUMP + diphosphate + H(+). It functions in the pathway pyrimidine metabolism; dUMP biosynthesis; dUMP from dCTP (dUTP route): step 2/2. Functionally, this enzyme is involved in nucleotide metabolism: it produces dUMP, the immediate precursor of thymidine nucleotides and it decreases the intracellular concentration of dUTP so that uracil cannot be incorporated into DNA. The sequence is that of Deoxyuridine 5'-triphosphate nucleotidohydrolase from Shewanella woodyi (strain ATCC 51908 / MS32).